Here is a 636-residue protein sequence, read N- to C-terminus: Rust resistance kinase Lr10 (636 aa).

The first 24 residues, 1-24, serve as a signal peptide directing secretion; that stretch reads MSKLLVIALLLLPLINHGIYLATA. At 25-276 the chain is on the extracellular side; sequence WDDQDFFKYC…MPDPHGSHIK (252 aa). N-linked (GlcNAc...) asparagine glycans are attached at residues Asn56, Asn177, and Asn222. The helical transmembrane segment at 277–297 threads the bilayer; it reads VIAATSSVAAFVALLLTVATV. Over 298–636 the chain is Cytoplasmic; that stretch reads LYLSLKTRYN…FVSSENELMS (339 aa). In terms of domain architecture, Protein kinase spans 339–628; that stretch reads RRFKEKVGQG…SLQMPPKPFV (290 aa). Residues 345–353 and Lys367 contribute to the ATP site; that span reads VGQGGFGSV. The Proton acceptor role is filled by Asp466.

This sequence belongs to the protein kinase superfamily. Ser/Thr protein kinase family. Specifically expressed in the aerial parts of the plant.

The protein resides in the cell membrane. The catalysed reaction is L-seryl-[protein] + ATP = O-phospho-L-seryl-[protein] + ADP + H(+). The enzyme catalyses L-threonyl-[protein] + ATP = O-phospho-L-threonyl-[protein] + ADP + H(+). The chain is Rust resistance kinase Lr10 from Triticum aestivum (Wheat).